We begin with the raw amino-acid sequence, 276 residues long: Dermonecrotic toxin LafSicTox-betaIE2 (276 aa).

His5 is an active-site residue. Mg(2+) contacts are provided by Glu25 and Asp27. The Nucleophile role is filled by His41. Intrachain disulfides connect Cys45/Cys51 and Cys47/Cys189. Asp85 contributes to the Mg(2+) binding site.

The protein belongs to the arthropod phospholipase D family. Class II subfamily. Mg(2+) is required as a cofactor. Expressed by the venom gland.

The protein resides in the secreted. The catalysed reaction is an N-(acyl)-sphingosylphosphocholine = an N-(acyl)-sphingosyl-1,3-cyclic phosphate + choline. The enzyme catalyses an N-(acyl)-sphingosylphosphoethanolamine = an N-(acyl)-sphingosyl-1,3-cyclic phosphate + ethanolamine. It carries out the reaction a 1-acyl-sn-glycero-3-phosphocholine = a 1-acyl-sn-glycero-2,3-cyclic phosphate + choline. It catalyses the reaction a 1-acyl-sn-glycero-3-phosphoethanolamine = a 1-acyl-sn-glycero-2,3-cyclic phosphate + ethanolamine. Functionally, dermonecrotic toxins cleave the phosphodiester linkage between the phosphate and headgroup of certain phospholipids (sphingolipid and lysolipid substrates), forming an alcohol (often choline) and a cyclic phosphate. This toxin acts on sphingomyelin (SM). It may also act on ceramide phosphoethanolamine (CPE), lysophosphatidylcholine (LPC) and lysophosphatidylethanolamine (LPE), but not on lysophosphatidylserine (LPS), and lysophosphatidylglycerol (LPG). It acts by transphosphatidylation, releasing exclusively cyclic phosphate products as second products. Induces dermonecrosis, hemolysis, increased vascular permeability, edema, inflammatory response, and platelet aggregation. In Loxosceles aff. spinulosa (strain GJB-2008) (Recluse spider), this protein is Dermonecrotic toxin LafSicTox-betaIE2.